The sequence spans 132 residues: UPF0329 protein ECU07_0050/ECU09_2020 (132 aa).

It belongs to the UPF0329 family.

The chain is UPF0329 protein ECU07_0050/ECU09_2020 from Encephalitozoon cuniculi (strain GB-M1) (Microsporidian parasite).